We begin with the raw amino-acid sequence, 438 residues long: Glutamyl-tRNA(Gln) amidotransferase subunit D (438 aa).

The region spanning 91–421 (KNLSILSTGG…SEIYEIMKTN (331 aa)) is the Asparaginase/glutaminase domain. Residues Thr101, Thr177, Asp178, and Lys254 contribute to the active site.

Belongs to the asparaginase 1 family. GatD subfamily. In terms of assembly, heterodimer of GatD and GatE.

It carries out the reaction L-glutamyl-tRNA(Gln) + L-glutamine + ATP + H2O = L-glutaminyl-tRNA(Gln) + L-glutamate + ADP + phosphate + H(+). Its function is as follows. Allows the formation of correctly charged Gln-tRNA(Gln) through the transamidation of misacylated Glu-tRNA(Gln) in organisms which lack glutaminyl-tRNA synthetase. The reaction takes place in the presence of glutamine and ATP through an activated gamma-phospho-Glu-tRNA(Gln). The GatDE system is specific for glutamate and does not act on aspartate. In Methanosphaera stadtmanae (strain ATCC 43021 / DSM 3091 / JCM 11832 / MCB-3), this protein is Glutamyl-tRNA(Gln) amidotransferase subunit D.